The following is a 144-amino-acid chain: 3-hydroxyacyl-[acyl-carrier-protein] dehydratase FabZ (144 aa).

The active site involves histidine 48.

The protein belongs to the thioester dehydratase family. FabZ subfamily.

Its subcellular location is the cytoplasm. It catalyses the reaction a (3R)-hydroxyacyl-[ACP] = a (2E)-enoyl-[ACP] + H2O. Involved in unsaturated fatty acids biosynthesis. Catalyzes the dehydration of short chain beta-hydroxyacyl-ACPs and long chain saturated and unsaturated beta-hydroxyacyl-ACPs. This Bacillus anthracis (strain A0248) protein is 3-hydroxyacyl-[acyl-carrier-protein] dehydratase FabZ.